The following is a 327-amino-acid chain: Deoxyribonuclease (327 aa).

The or 35 signal peptide spans 1-24 (MSKKLRNFLVRIIVAAFASFAVMA). Residues 299–327 (DSTTDEIENSVDDSEEIVYNDTTTEEEEN) form a disordered region.

The catalysed reaction is Endonucleolytic cleavage to 5'-phosphodinucleotide and 5'-phosphooligonucleotide end-products.. In terms of biological role, may have a role in S.equisimilis virulence. This Streptococcus dysgalactiae subsp. equisimilis (Streptococcus equisimilis) protein is Deoxyribonuclease (sdc).